Consider the following 422-residue polypeptide: F-box/FBD/LRR-repeat protein At5g56420 (422 aa).

Positions arginine 5 to leucine 54 constitute an F-box domain. LRR repeat units lie at residues cysteine 59–isoleucine 85, valine 136–aspartate 163, valine 164–arginine 189, aspartate 193–lysine 212, serine 214–aspartate 238, leucine 279–threonine 304, and cysteine 305–glutamine 330. Positions serine 342 to proline 391 constitute an FBD domain.

This chain is F-box/FBD/LRR-repeat protein At5g56420, found in Arabidopsis thaliana (Mouse-ear cress).